The chain runs to 103 residues: Large ribosomal subunit protein bL21 (103 aa).

This sequence belongs to the bacterial ribosomal protein bL21 family. In terms of assembly, part of the 50S ribosomal subunit. Contacts protein L20.

This protein binds to 23S rRNA in the presence of protein L20. The sequence is that of Large ribosomal subunit protein bL21 from Salmonella agona (strain SL483).